An 85-amino-acid chain; its full sequence is Probable small nuclear ribonucleoprotein G (85 aa).

Residues 6–78 (QADPDLTKLL…ILLMEPLESM (73 aa)) enclose the Sm domain.

It belongs to the snRNP Sm proteins family. In terms of assembly, core component of the spliceosomal U1, U2, U4 and U5 small nuclear ribonucleoproteins (snRNPs), the building blocks of the spliceosome. Most spliceosomal snRNPs contain a common set of Sm proteins, SNRPB, SNRPD1, SNRPD2, SNRPD3, SNRPE, SNRPF and SNRPG that assemble in a heptameric protein ring on the Sm site of the small nuclear RNA to form the core snRNP. Component of the U1 snRNP. Component of the U4/U6-U5 tri-snRNP complex. Component of the U7 snRNP complex. Component of the U11/U12 snRNPs that are part of the U12-type spliceosome.

The protein localises to the cytoplasm. It localises to the cytosol. Its subcellular location is the nucleus. Plays a role in pre-mRNA splicing as a core component of the spliceosomal U1, U2, U4 and U5 small nuclear ribonucleoproteins (snRNPs), the building blocks of the spliceosome. Component of both the pre-catalytic spliceosome B complex and activated spliceosome C complexes. Is also a component of the minor U12 spliceosome. This Dictyostelium discoideum (Social amoeba) protein is Probable small nuclear ribonucleoprotein G (snrpG).